The sequence spans 298 residues: 5'-AMP-activated protein kinase subunit beta (298 aa).

The disordered stretch occupies residues 1–98 (MGNVQSQEGE…KTHQPYSGPC (98 aa)). A compositionally biased stretch (polar residues) spans 19–30 (QDATTTPDNANN). The span at 48-59 (LNQEGEMSDDNQ) shows a compositional bias: acidic residues. Over residues 60 to 77 (QEGGNNRTSQNGTSGSSG) the composition is skewed to polar residues. Residues 78-91 (HTKRRSQTSGKKTH) show a composition bias toward basic residues. 250-252 (DQS) is an ADP binding site.

It belongs to the 5'-AMP-activated protein kinase beta subunit family. As to quaternary structure, AMPK is a heterotrimer of an alpha catalytic subunit (ssp2), a beta (amk2) and a gamma non-catalytic subunits (cbs2). The beta subunit serves as a bridge between the catalytic and the regulatory subunit.

Its subcellular location is the cytoplasm. In terms of biological role, beta subunit of AMP-activated protein kinase (AMPK), which is required for transcriptional, metabolic, and developmental adaptations in response to glucose limitation. Has a structural role, mediating heterotrimer formation, and a regulatory role, defining carbon source-regulated subcellular location and substrate specificity of the AMPK kinase complex. The sequence is that of 5'-AMP-activated protein kinase subunit beta (amk2) from Schizosaccharomyces pombe (strain 972 / ATCC 24843) (Fission yeast).